Reading from the N-terminus, the 754-residue chain is Ribosomal RNA large subunit methyltransferase K/L (754 aa).

The region spanning 46–157 is the THUMP domain; the sequence is TAYRLCLWSR…RGEAILSLDL (112 aa).

The protein belongs to the methyltransferase superfamily. RlmKL family.

It localises to the cytoplasm. It catalyses the reaction guanosine(2445) in 23S rRNA + S-adenosyl-L-methionine = N(2)-methylguanosine(2445) in 23S rRNA + S-adenosyl-L-homocysteine + H(+). The catalysed reaction is guanosine(2069) in 23S rRNA + S-adenosyl-L-methionine = N(2)-methylguanosine(2069) in 23S rRNA + S-adenosyl-L-homocysteine + H(+). In terms of biological role, specifically methylates the guanine in position 2445 (m2G2445) and the guanine in position 2069 (m7G2069) of 23S rRNA. The protein is Ribosomal RNA large subunit methyltransferase K/L of Pseudomonas fluorescens (strain ATCC BAA-477 / NRRL B-23932 / Pf-5).